The primary structure comprises 63 residues: Large ribosomal subunit protein uL29 (63 aa).

This sequence belongs to the universal ribosomal protein uL29 family.

The chain is Large ribosomal subunit protein uL29 from Haemophilus ducreyi (strain 35000HP / ATCC 700724).